Reading from the N-terminus, the 370-residue chain is Phosphate acyltransferase (370 aa).

It belongs to the PlsX family. As to quaternary structure, homodimer. Probably interacts with PlsY.

It is found in the cytoplasm. The catalysed reaction is a fatty acyl-[ACP] + phosphate = an acyl phosphate + holo-[ACP]. It functions in the pathway lipid metabolism; phospholipid metabolism. Its function is as follows. Catalyzes the reversible formation of acyl-phosphate (acyl-PO(4)) from acyl-[acyl-carrier-protein] (acyl-ACP). This enzyme utilizes acyl-ACP as fatty acyl donor, but not acyl-CoA. The protein is Phosphate acyltransferase of Polaromonas naphthalenivorans (strain CJ2).